We begin with the raw amino-acid sequence, 186 residues long: Putative inactive recombination-promoting nuclease-like protein YjiQ (186 aa).

This sequence belongs to the Rpn/YhgA-like nuclease family.

Its function is as follows. This pseudogene is the C-terminal fragment of low activity DNA endonuclease RpnD which probably yields 3'-hydroxyl ends. The intact protein can be seen in this entry (AC B7NGZ6). Expression of the repaired protein increases the frequency of recA-independent recombination, but also decreases viability probably via DNA damage; in a RecA strain expression has no effect on viability but does induce the SOS repair response. May play a role in horizontal gene transfer. The protein is Putative inactive recombination-promoting nuclease-like protein YjiQ (yjiQ) of Escherichia coli (strain K12).